Here is a 392-residue protein sequence, read N- to C-terminus: Chorismate synthase (392 aa).

NADP(+) contacts are provided by arginine 39 and arginine 45. FMN is bound by residues 131–133 (RSS), 255–256 (NA), glycine 300, 315–319 (KPIPT), and arginine 341.

Belongs to the chorismate synthase family. As to quaternary structure, homotetramer. Requires FMNH2 as cofactor.

The enzyme catalyses 5-O-(1-carboxyvinyl)-3-phosphoshikimate = chorismate + phosphate. It functions in the pathway metabolic intermediate biosynthesis; chorismate biosynthesis; chorismate from D-erythrose 4-phosphate and phosphoenolpyruvate: step 7/7. Its function is as follows. Catalyzes the anti-1,4-elimination of the C-3 phosphate and the C-6 proR hydrogen from 5-enolpyruvylshikimate-3-phosphate (EPSP) to yield chorismate, which is the branch point compound that serves as the starting substrate for the three terminal pathways of aromatic amino acid biosynthesis. This reaction introduces a second double bond into the aromatic ring system. The chain is Chorismate synthase from Leuconostoc mesenteroides subsp. mesenteroides (strain ATCC 8293 / DSM 20343 / BCRC 11652 / CCM 1803 / JCM 6124 / NCDO 523 / NBRC 100496 / NCIMB 8023 / NCTC 12954 / NRRL B-1118 / 37Y).